Reading from the N-terminus, the 560-residue chain is Nucleoprotein (560 aa).

A binding site for the cap structure m7GTP region spans residues 54–236 (LRKAKRSDAD…ITRDESAVNI (183 aa)). A compositionally biased stretch (polar residues) spans 323–332 (GRSWDNTSVD). The interval 323 to 349 (GRSWDNTSVDLNPKPDPGPRAPEKNGQ) is disordered. Mn(2+) is bound by residues aspartate 380 and glutamate 382. Residues glutamate 390, cysteine 497, histidine 500, and cysteine 521 each coordinate Zn(2+). Residue aspartate 525 coordinates Mn(2+).

The protein belongs to the arenaviridae nucleocapsid protein family. As to quaternary structure, homomultimerizes to form the nucleocapsid. Binds to viral genomic RNA. Interacts with glycoprotein G2. Interacts with protein Z; this interaction probably directs the encapsidated genome to budding sites. Interacts with protein L; this interaction does not interfere with Z-L interaction. Interacts with host IKBKE (via Protein kinase domain); the interaction inhibits IKBKE kinase activity.

It localises to the virion. The protein resides in the host cytoplasm. Its function is as follows. Encapsidates the genome, protecting it from nucleases. The encapsidated genomic RNA is termed the nucleocapsid (NC). Serves as template for viral transcription and replication. The increased presence of protein N in host cell does not seem to trigger the switch from transcription to replication as observed in other negative strain RNA viruses. Through the interaction with host IKBKE, strongly inhibits the phosphorylation and nuclear translocation of host IRF3, a protein involved in interferon activation pathway, leading to the inhibition of interferon-beta and IRF3-dependent promoters activation. Also encodes a functional 3'-5' exoribonuclease that degrades preferentially dsRNA substrates and thereby participates in the suppression of interferon induction. The polypeptide is Nucleoprotein (Cupixi mammarenavirus (isolate Rat/Brasil/BeAn 119303/1970) (CPXV)).